Here is a 1325-residue protein sequence, read N- to C-terminus: Nephrocystin-3 (1325 aa).

The tract at residues methionine 1–tyrosine 20 is disordered. Glycine 2 carries N-myristoyl glycine lipidation. The stretch at serine 107–valine 203 forms a coiled coil. TPR repeat units lie at residues threonine 467–leucine 500, cysteine 881–methionine 914, threonine 916–leucine 937, alanine 938–alanine 971, alanine 980–alanine 1013, alanine 1022–alanine 1055, alanine 1088–valine 1121, alanine 1130–alanine 1163, alanine 1172–serine 1205, alanine 1214–serine 1247, and glycine 1256–glutamate 1289. A disordered region spans residues leucine 1293–serine 1325. Residues serine 1299 to serine 1325 are compositionally biased toward polar residues.

As to quaternary structure, interacts with NPHP1 and INVS/NPHP2. Interacts (when myristoylated) with UNC119 and UNC119B; interaction is required for localization to cilium. Interacts with CEP164. Component of a complex containing at least ANKS6, INVS, NEK8 and NPHP3. ANKS6 may organize complex assembly by linking INVS and NPHP3 to NEK8 and INVS may target the complex to the proximal ciliary axoneme.

It is found in the cell projection. It localises to the cilium. Its function is as follows. Required for normal ciliary development and function. Inhibits disheveled-1-induced canonical Wnt-signaling activity and may also play a role in the control of non-canonical Wnt signaling that regulates planar cell polarity. Probably acts as a molecular switch between different Wnt signaling pathways. Required for proper convergent extension cell movements. This is Nephrocystin-3 (Nphp3) from Mus musculus (Mouse).